We begin with the raw amino-acid sequence, 497 residues long: Guanosine-5'-triphosphate,3'-diphosphate pyrophosphatase (497 aa).

It belongs to the GppA/Ppx family. GppA subfamily.

The enzyme catalyses guanosine 3'-diphosphate 5'-triphosphate + H2O = guanosine 3',5'-bis(diphosphate) + phosphate + H(+). Its pathway is purine metabolism; ppGpp biosynthesis; ppGpp from GTP: step 2/2. Catalyzes the conversion of pppGpp to ppGpp. Guanosine pentaphosphate (pppGpp) is a cytoplasmic signaling molecule which together with ppGpp controls the 'stringent response', an adaptive process that allows bacteria to respond to amino acid starvation, resulting in the coordinated regulation of numerous cellular activities. The protein is Guanosine-5'-triphosphate,3'-diphosphate pyrophosphatase of Aliivibrio fischeri (strain MJ11) (Vibrio fischeri).